Here is a 950-residue protein sequence, read N- to C-terminus: Protocadherin alpha-13 (950 aa).

The signal sequence occupies residues 1 to 29 (MLSSWQGGPRPRQLLLWLLILAAWETGSG). The Extracellular portion of the chain corresponds to 30–697 (QLHYSVPEEA…GPEAALVDVN (668 aa)). Cadherin domains are found at residues 34-133 (SVPE…PPIF), 134-242 (PESK…APEF), 243-350 (YQSV…APEV), 351-455 (TITS…APAF), 456-565 (AQPE…APAL), and 581-678 (MPRS…APQA). Residues N257 and N265 are each glycosylated (N-linked (GlcNAc...) asparagine). N-linked (GlcNAc...) asparagine glycosylation is present at N548. Residues 698–718 (VYLIIAICAVSSLLVLTLLLY) form a helical membrane-spanning segment. Residues 719–950 (TALRCSAPPT…GNSTTDNSDQ (232 aa)) are Cytoplasmic-facing. 6 PXXP repeats span residues 734–737 (PGKP), 774–777 (PSLP), 799–802 (PRQP), 832–835 (PGGP), 873–876 (PGNP), and 891–894 (PGSP). The interval 734-894 (PGKPTLVCSS…PDKFIIPGSP (161 aa)) is 6 X 4 AA repeats of P-X-X-P. Disordered regions lie at residues 780–806 (LGSA…NPDW) and 829–950 (RAGP…NSDQ). Residues 787–800 (GQREEDSECLKEPR) are compositionally biased toward basic and acidic residues. Over residues 909–923 (DKSDFITFGKKEETK) the composition is skewed to basic and acidic residues.

The protein localises to the cell membrane. In terms of biological role, potential calcium-dependent cell-adhesion protein. May be involved in the establishment and maintenance of specific neuronal connections in the brain. This chain is Protocadherin alpha-13 (PCDHA13), found in Homo sapiens (Human).